The chain runs to 261 residues: Undecaprenyl-diphosphatase (261 aa).

6 consecutive transmembrane segments (helical) span residues 39–59 (NVLLFDILVHLGTLVPLLIIF), 76–96 (LLIIAGTVPTALIGLGFKDFF), 99–119 (LFVSGSTLGIEFIITGLILWL), 173–193 (AAKFSFLLSIPAILGAAVLDL), 206–226 (IDLMPFIVGFFAAMLSGYFAV), and 238–258 (LTWFSYYVWILGVTILVLQAA).

The protein belongs to the UppP family.

It is found in the cell membrane. It carries out the reaction di-trans,octa-cis-undecaprenyl diphosphate + H2O = di-trans,octa-cis-undecaprenyl phosphate + phosphate + H(+). Functionally, catalyzes the dephosphorylation of undecaprenyl diphosphate (UPP). Confers resistance to bacitracin. This is Undecaprenyl-diphosphatase from Carboxydothermus hydrogenoformans (strain ATCC BAA-161 / DSM 6008 / Z-2901).